The following is a 234-amino-acid chain: Ribonuclease HII (234 aa).

The region spanning 16–207 (ALVAGVDEAG…VRRMLTPKAI (192 aa)) is the RNase H type-2 domain. Aspartate 22, glutamate 23, and aspartate 115 together coordinate a divalent metal cation.

This sequence belongs to the RNase HII family. Mn(2+) is required as a cofactor. Requires Mg(2+) as cofactor.

It is found in the cytoplasm. It carries out the reaction Endonucleolytic cleavage to 5'-phosphomonoester.. Endonuclease that specifically degrades the RNA of RNA-DNA hybrids. This Xylella fastidiosa (strain M12) protein is Ribonuclease HII.